The chain runs to 147 residues: MSEVKHLEINYKTDELFEAFREFGNKDLYMVEELQGQMIDASSESPFYGIFHGENLVARMALLKKGDVEEIYFPEFDDYLLLWKLEVLDNYKNKGYGQSLIDYAKSYNMPIKAIARQNSKEFLMNQDFEDVHAKNPEGHDVLVWAPK.

Positions 7–147 (LEINYKTDEL…GHDVLVWAPK (141 aa)) constitute an N-acetyltransferase domain.

This is an uncharacterized protein from Staphylococcus haemolyticus (strain JCSC1435).